The sequence spans 373 residues: 3 beta-hydroxysteroid dehydrogenase/Delta 5--&gt;4-isomerase type 4 (373 aa).

The active-site Proton acceptor is Y155. Residue K159 coordinates NAD(+). Residues 288–308 (LPLLYWLAFLLEIVSFFLHPV) traverse the membrane as a helical segment. An N6-acetyllysine modification is found at K350.

This sequence belongs to the 3-beta-HSD family. As to expression, skin, placenta, also detectable in ovary and adrenal gland.

The protein localises to the endoplasmic reticulum membrane. It localises to the mitochondrion membrane. The enzyme catalyses a 3beta-hydroxy-Delta(5)-steroid + NAD(+) = a 3-oxo-Delta(5)-steroid + NADH + H(+). The catalysed reaction is a 3-oxo-Delta(5)-steroid = a 3-oxo-Delta(4)-steroid. It participates in lipid metabolism; steroid biosynthesis. Its function is as follows. 3-beta-HSD is a bifunctional enzyme, that catalyzes the oxidative conversion of Delta(5)-ene-3-beta-hydroxy steroid, and the oxidative conversion of ketosteroids. The 3-beta-HSD enzymatic system plays a crucial role in the biosynthesis of all classes of hormonal steroids. This is 3 beta-hydroxysteroid dehydrogenase/Delta 5--&gt;4-isomerase type 4 (Hsd3b6) from Rattus norvegicus (Rat).